We begin with the raw amino-acid sequence, 383 residues long: Protein pelota homolog (383 aa).

This sequence belongs to the eukaryotic release factor 1 family. Pelota subfamily. As to quaternary structure, component of the Pelota-HBS1L complex, also named Dom34-Hbs1 complex, composed of PELO and HBS1L. A divalent metal cation is required as a cofactor.

It is found in the cytoplasm. Component of the Pelota-HBS1L complex, a complex that recognizes stalled ribosomes and triggers the No-Go Decay (NGD) pathway. In the Pelota-HBS1L complex, PELO recognizes ribosomes stalled at the 3' end of an mRNA and engages stalled ribosomes by destabilizing mRNA in the mRNA channel. Following mRNA extraction from stalled ribosomes by the SKI complex, the Pelota-HBS1L complex promotes recruitment of ABCE1, which drives the disassembly of stalled ribosomes, followed by degradation of damaged mRNAs as part of the NGD pathway. The chain is Protein pelota homolog (pelo) from Xenopus laevis (African clawed frog).